We begin with the raw amino-acid sequence, 295 residues long: Diaminopimelate epimerase (295 aa).

Substrate-binding residues include Asn11 and Asn67. Residue Cys76 is the Proton donor of the active site. Substrate is bound by residues 77 to 78, Asn171, Asn210, and 228 to 229; these read GN and ER. The Proton acceptor role is filled by Cys237. Residue 238 to 239 coordinates substrate; sequence GT.

This sequence belongs to the diaminopimelate epimerase family. In terms of assembly, homodimer.

It is found in the cytoplasm. The catalysed reaction is (2S,6S)-2,6-diaminopimelate = meso-2,6-diaminopimelate. The protein operates within amino-acid biosynthesis; L-lysine biosynthesis via DAP pathway; DL-2,6-diaminopimelate from LL-2,6-diaminopimelate: step 1/1. Functionally, catalyzes the stereoinversion of LL-2,6-diaminopimelate (L,L-DAP) to meso-diaminopimelate (meso-DAP), a precursor of L-lysine. This is Diaminopimelate epimerase from Methanocaldococcus jannaschii (strain ATCC 43067 / DSM 2661 / JAL-1 / JCM 10045 / NBRC 100440) (Methanococcus jannaschii).